The following is a 154-amino-acid chain: Troponin C, isoform 1 (154 aa).

4 consecutive EF-hand domains span residues 8-43 (EQTA…LGHQ), 44-79 (LDDA…FLVE), 84-119 (AMMA…LDDK), and 120-154 (LTND…GGDD). 5 residues coordinate Ca(2+): aspartate 57, aspartate 59, serine 61, glutamine 63, and glutamate 68. 5 residues coordinate Ca(2+): aspartate 133, aspartate 135, serine 137, threonine 139, and glutamate 144.

Belongs to the troponin C family. In terms of tissue distribution, present only in adult muscles.

In Drosophila melanogaster (Fruit fly), this protein is Troponin C, isoform 1 (TpnC41C).